The primary structure comprises 174 residues: Recombination protein RecR (174 aa).

Residues 30 to 45 form a C4-type zinc finger; the sequence is CNACRTFTEEEECTIC. In terms of domain architecture, Toprim spans 54 to 149; it reads GQLCIVEMPE…KVTRIAHGIP (96 aa).

This sequence belongs to the RecR family.

In terms of biological role, may play a role in DNA repair. It seems to be involved in an RecBC-independent recombinational process of DNA repair. It may act with RecF and RecO. In Haemophilus ducreyi (strain 35000HP / ATCC 700724), this protein is Recombination protein RecR.